The following is a 246-amino-acid chain: Pyridoxine 5'-phosphate synthase (246 aa).

Asn9 contributes to the 3-amino-2-oxopropyl phosphate binding site. A 1-deoxy-D-xylulose 5-phosphate-binding site is contributed by 11-12 (DH). Arg20 lines the 3-amino-2-oxopropyl phosphate pocket. His45 serves as the catalytic Proton acceptor. 1-deoxy-D-xylulose 5-phosphate contacts are provided by Arg47 and His52. Residue Glu72 is the Proton acceptor of the active site. Residue Thr102 participates in 1-deoxy-D-xylulose 5-phosphate binding. His193 functions as the Proton donor in the catalytic mechanism. 3-amino-2-oxopropyl phosphate is bound by residues Gly194 and 215-216 (GH).

This sequence belongs to the PNP synthase family. Homooctamer; tetramer of dimers.

The protein localises to the cytoplasm. The enzyme catalyses 3-amino-2-oxopropyl phosphate + 1-deoxy-D-xylulose 5-phosphate = pyridoxine 5'-phosphate + phosphate + 2 H2O + H(+). The protein operates within cofactor biosynthesis; pyridoxine 5'-phosphate biosynthesis; pyridoxine 5'-phosphate from D-erythrose 4-phosphate: step 5/5. Functionally, catalyzes the complicated ring closure reaction between the two acyclic compounds 1-deoxy-D-xylulose-5-phosphate (DXP) and 3-amino-2-oxopropyl phosphate (1-amino-acetone-3-phosphate or AAP) to form pyridoxine 5'-phosphate (PNP) and inorganic phosphate. This Colwellia psychrerythraea (strain 34H / ATCC BAA-681) (Vibrio psychroerythus) protein is Pyridoxine 5'-phosphate synthase.